Reading from the N-terminus, the 602-residue chain is MFS-type efflux transporter pyiT (602 aa).

The interval 1–33 (MEKAKDSLPTTGDPVPSQGTINPVDETGGSASD) is disordered. Transmembrane regions (helical) follow at residues 43 to 63 (FWFT…EGSV), 123 to 143 (WLTI…GGAT), 156 to 176 (GLGS…LLPL), 185 to 205 (IIFM…GILV), 212 to 232 (WVFY…FFFL), 251 to 271 (FFGN…LTYG), and 282 to 302 (IIVS…FEAS). An N-linked (GlcNAc...) asparagine glycan is attached at asparagine 317. A run of 6 helical transmembrane segments spans residues 325–345 (IATF…PLYF), 357–377 (GVML…GGAL), 386–406 (NIHF…TILN), 410–430 (SLAV…VPTA), 451–471 (TFAF…AAIF), and 524–544 (LERV…VIFL). The span at 564–585 (IPQTAADNSASRPNTINDTASQ) shows a compositional bias: polar residues. Residues 564–602 (IPQTAADNSASRPNTINDTASQAPILKQRRSTNQERETV) form a disordered region. An N-linked (GlcNAc...) asparagine glycan is attached at asparagine 580.

Belongs to the major facilitator superfamily.

Its subcellular location is the cell membrane. In terms of biological role, MFS-type efflux transporter; part of the gene cluster that mediates the biosynthesis of the mycotoxin pyrichalasin H, a tyrosine-derived cytochalasan that inhibits the growth of rice seedlings, but also inhibits lymphocyte capping and actin polymerization and alters cell morphology. Pyrichalasin H is indicated as the responsible agent for the genus-specific pathogenicity of M.grisea toward crabgrass. PyiT might be involved in the excretion of pyrichalasin H. This Pyricularia grisea (Crabgrass-specific blast fungus) protein is MFS-type efflux transporter pyiT.